The following is a 249-amino-acid chain: Glucosamine-6-phosphate deaminase (249 aa).

Residue Asp-67 is the Proton acceptor; for enolization step of the active site. The For ring-opening step role is filled by Asn-136. His-138 acts as the Proton acceptor; for ring-opening step in catalysis. Glu-143 (for ring-opening step) is an active-site residue.

This sequence belongs to the glucosamine/galactosamine-6-phosphate isomerase family. NagB subfamily.

It carries out the reaction alpha-D-glucosamine 6-phosphate + H2O = beta-D-fructose 6-phosphate + NH4(+). It functions in the pathway amino-sugar metabolism; N-acetylneuraminate degradation; D-fructose 6-phosphate from N-acetylneuraminate: step 5/5. Catalyzes the reversible isomerization-deamination of glucosamine 6-phosphate (GlcN6P) to form fructose 6-phosphate (Fru6P) and ammonium ion. The protein is Glucosamine-6-phosphate deaminase of Clostridium botulinum (strain Eklund 17B / Type B).